A 270-amino-acid chain; its full sequence is Interleukin-1 alpha (270 aa).

The propeptide occupies 1-114; it reads MAKVPDLFED…HDLEETIQPR (114 aa). Residue Asn46 is glycosylated (N-linked (GlcNAc...) asparagine). N6-acetyllysine is present on Lys85. Positions 85–89 are nuclear localization signal (NLS); it reads KKRRL. Residue Ser90 is modified to Phosphoserine. Asn139 carries N-linked (GlcNAc...) asparagine glycosylation.

It belongs to the IL-1 family. As to quaternary structure, monomer. Interacts with TMED10; the interaction mediates the translocation from the cytoplasm into the ERGIC (endoplasmic reticulum-Golgi intermediate compartment) and thereby secretion. Interacts with IL1R1. Interacts with S100A13; this interaction is the first step in the export of IL1A, followed by direct translocation of this complex across the plasma membrane. Acetylated within its nuclear localization sequence, which impacts subcellular localization. In terms of processing, proteolytic processed by CAPN1 in a calcium-dependent manner. Cleavage from 31 kDa precursor to 18 kDa biologically active molecules. Post-translationally, phosphorylated. Phosphorylation greatly enhances susceptibility to digestion and promotes the conversion of pre-IL1A alpha to the biologically active IL1A.

The protein resides in the nucleus. The protein localises to the cytoplasm. Its subcellular location is the secreted. Cytokine constitutively present intracellularly in nearly all resting non-hematopoietic cells that plays an important role in inflammation and bridges the innate and adaptive immune systems. After binding to its receptor IL1R1 together with its accessory protein IL1RAP, forms the high affinity interleukin-1 receptor complex. Signaling involves the recruitment of adapter molecules such as MYD88, IRAK1 or IRAK4. In turn, mediates the activation of NF-kappa-B and the three MAPK pathways p38, p42/p44 and JNK pathways. Within the cell, acts as an alarmin and cell death results in its liberation in the extracellular space after disruption of the cell membrane to induce inflammation and alert the host to injury or damage. In addition to its role as a danger signal, which occurs when the cytokine is passively released by cell necrosis, directly senses DNA damage and acts as signal for genotoxic stress without loss of cell integrity. The protein is Interleukin-1 alpha of Rattus norvegicus (Rat).